The chain runs to 605 residues: Translation factor GUF1 homolog, chloroplastic (605 aa).

The tr-type G domain maps to 7–189; it reads RRIRNFSIIA…RIVQVVPPPR (183 aa). GTP is bound by residues 16–23, 82–86, and 136–139; these read AHIDHGKS, DTPGH, and NKID.

This sequence belongs to the TRAFAC class translation factor GTPase superfamily. Classic translation factor GTPase family. LepA subfamily.

It is found in the plastid. The protein localises to the chloroplast. The enzyme catalyses GTP + H2O = GDP + phosphate + H(+). In terms of biological role, promotes chloroplast protein synthesis. May act as a fidelity factor of the translation reaction, by catalyzing a one-codon backward translocation of tRNAs on improperly translocated ribosomes. The polypeptide is Translation factor GUF1 homolog, chloroplastic (Ostreococcus lucimarinus (strain CCE9901)).